Reading from the N-terminus, the 100-residue chain is UPF0473 protein Lm4b_01511 (100 aa).

This sequence belongs to the UPF0473 family.

The protein is UPF0473 protein Lm4b_01511 of Listeria monocytogenes serotype 4b (strain CLIP80459).